Here is an 89-residue protein sequence, read N- to C-terminus: UPF0250 protein Bphyt_0500 (89 aa).

It belongs to the UPF0250 family.

In Paraburkholderia phytofirmans (strain DSM 17436 / LMG 22146 / PsJN) (Burkholderia phytofirmans), this protein is UPF0250 protein Bphyt_0500.